A 268-amino-acid chain; its full sequence is Basic endochitinase CHB4 (268 aa).

The N-terminal stretch at 1–24 (MALTKLSLVLFLCFLGLYSETVKS) is a signal peptide. The region spanning 25–59 (QNCGCAPNLCCSQFGYCGSTDAYCGTGCRSGPCRS) is the Chitin-binding type-1 domain. Intrachain disulfides connect cysteine 27-cysteine 35, cysteine 29-cysteine 41, cysteine 34-cysteine 48, cysteine 52-cysteine 57, cysteine 92-cysteine 137, cysteine 150-cysteine 159, and cysteine 236-cysteine 268. The catalytic stretch occupies residues 71–268 (SVGSIVTQAF…GVDPGPNLSC (198 aa)). The Proton donor role is filled by glutamate 132. Asparagine 265 carries an N-linked (GlcNAc...) asparagine glycan.

This sequence belongs to the glycosyl hydrolase 19 family. Chitinase class I subfamily.

The protein resides in the secreted. It localises to the extracellular space. The enzyme catalyses Random endo-hydrolysis of N-acetyl-beta-D-glucosaminide (1-&gt;4)-beta-linkages in chitin and chitodextrins.. Defense against chitin-containing fungal pathogens. The protein is Basic endochitinase CHB4 of Brassica napus (Rape).